Here is a 333-residue protein sequence, read N- to C-terminus: Alpha-N-acetylgalactosaminide alpha-2,6-sialyltransferase 6 (333 aa).

Polar residues predominate over residues 1–12 (MACSRPPSQCEP). Residues 1 to 26 (MACSRPPSQCEPTSLPPGPPAGRRHL) form a disordered region. At 1-43 (MACSRPPSQCEPTSLPPGPPAGRRHLPLSRRRREMSSNKEQRS) the chain is on the cytoplasmic side. The chain crosses the membrane as a helical; Signal-anchor for type II membrane protein span at residues 44–64 (AVFVILFALITILILYSSNSA). Over 65-333 (NEVFHYGSLR…GITFSHPSWT (269 aa)) the chain is Lumenal. A glycan (N-linked (GlcNAc...) asparagine) is linked at asparagine 98. Cysteine 108 and cysteine 256 are disulfide-bonded.

Belongs to the glycosyltransferase 29 family. Expressed in kidney, in proximal tubule epithelial cells. Expressed in colon cell lines.

It localises to the golgi apparatus membrane. The catalysed reaction is a ganglioside GM1b (d18:1(4E)) + CMP-N-acetyl-beta-neuraminate = a ganglioside GD1alpha (d18:1(4E)) + CMP + H(+). The enzyme catalyses N-acetyl-alpha-neuraminosyl-(2-&gt;3)-beta-D-galactosyl-(1-&gt;3)-N-acetyl-beta-D-glucosaminyl-(1-&gt;3)-beta-D-galactosyl-(1-&gt;4)-beta-D-glucosyl-(1&lt;-&gt;1')-N-acyl-sphing-4-enine + CMP-N-acetyl-beta-neuraminate = N-acetyl-alpha-neuraminosyl-(2-&gt;3)-beta-D-galactosyl-(1-&gt;3)-[N-acetyl-alpha-neuraminosyl-(2-&gt;6)]-N-acetyl-beta-D-glucosaminyl-(1-&gt;3)-beta-D-galactosyl-(1-&gt;4)-beta-D-glucosyl-(1&lt;-&gt;1')-N-acyl-sphing-4-enine + CMP + H(+). It catalyses the reaction a globoside MSGG + CMP-N-acetyl-beta-neuraminate = a globoside DSGG + CMP + H(+). It carries out the reaction a ganglioside GD1a (d18:1(4E)) + CMP-N-acetyl-beta-neuraminate = a ganglioside GT1aalpha (d18:1(4E)) + CMP + H(+). The catalysed reaction is a ganglioside GT1b (d18:1(4E)) + CMP-N-acetyl-beta-neuraminate = a ganglioside GQ1balpha (d18:1(4E)) + CMP + H(+). The enzyme catalyses 3-O-[alpha-Neu5Ac-(2-&gt;3)-beta-D-Gal-(1-&gt;3)-alpha-D-GalNAc]-L-Ser-[protein] + CMP-N-acetyl-beta-neuraminate = a 3-O-{alpha-Neu5Ac-(2-&gt;3)-beta-D-Gal-(1-&gt;3)-[alpha-Neu5Ac-(2-&gt;6)]-alpha-D-GalNAc}-L-seryl-[protein] + CMP + H(+). It catalyses the reaction 3-O-[alpha-Neu5Ac-(2-&gt;3)-beta-D-Gal-(1-&gt;3)-alpha-D-GalNAc]-L-Thr-[protein] + CMP-N-acetyl-beta-neuraminate = a 3-O-{alpha-Neu5Ac-(2-&gt;3)-beta-D-Gal-(1-&gt;3)-[alpha-Neu5Ac-(2-&gt;6)]-alpha-D-GalNAc}-L-threonyl-[protein] + CMP + H(+). In terms of biological role, transfers the sialyl group (N-acetyl-alpha-neuraminyl or NeuAc) from CMP-NeuAc onto glycoproteins and glycolipids, forming an alpha-2,6-linkage. Produces branched type disialyl structures by transfer of a sialyl group onto the GalNAc or GlcNAc residue inside backbone core chains having a terminal sialic acid with an alpha-2,3-linkage on Gal. ST6GalNAcVI prefers glycolipids to glycoproteins, predominantly catalyzing the biosynthesis of ganglioside GD1alpha from GM1b. Besides GMb1, MSGG and other glycolipids, it shows activity towards sialyl Lc4Cer generating disialyl Lc4Cer, which can lead to the synthesis of disialyl Lewis a (Le(a)), suggested to be a cancer-associated antigen. Also has activity toward GD1a and GT1b, and can generate DSGG (disialylgalactosylgloboside) from MSGG (monosialylgalactosylgloboside). The chain is Alpha-N-acetylgalactosaminide alpha-2,6-sialyltransferase 6 (ST6GALNAC6) from Homo sapiens (Human).